Consider the following 89-residue polypeptide: Large ribosomal subunit protein eL34 (89 aa).

The segment at 45-71 (GIPRGRPVEMRKLPKTKKRPERPMPHL) is disordered.

Belongs to the eukaryotic ribosomal protein eL34 family. Part of the 50S ribosomal subunit.

The sequence is that of Large ribosomal subunit protein eL34 from Pyrococcus furiosus (strain ATCC 43587 / DSM 3638 / JCM 8422 / Vc1).